We begin with the raw amino-acid sequence, 416 residues long: Gamma-glutamyl phosphate reductase (416 aa).

The protein belongs to the gamma-glutamyl phosphate reductase family.

The protein localises to the cytoplasm. The enzyme catalyses L-glutamate 5-semialdehyde + phosphate + NADP(+) = L-glutamyl 5-phosphate + NADPH + H(+). It participates in amino-acid biosynthesis; L-proline biosynthesis; L-glutamate 5-semialdehyde from L-glutamate: step 2/2. In terms of biological role, catalyzes the NADPH-dependent reduction of L-glutamate 5-phosphate into L-glutamate 5-semialdehyde and phosphate. The product spontaneously undergoes cyclization to form 1-pyrroline-5-carboxylate. In Streptococcus thermophilus (strain CNRZ 1066), this protein is Gamma-glutamyl phosphate reductase.